Reading from the N-terminus, the 757-residue chain is 5-methyltetrahydropteroyltriglutamate--homocysteine methyltransferase (757 aa).

Residues 16–19 and Lys112 each bind 5-methyltetrahydropteroyltri-L-glutamate; that span reads RELK. L-homocysteine-binding positions include 432-434 and Glu485; that span reads IGS. L-methionine contacts are provided by residues 432 to 434 and Glu485; that span reads IGS. Residues 516-517 and Trp562 contribute to the 5-methyltetrahydropteroyltri-L-glutamate site; that span reads RC. Residue Asp600 coordinates L-homocysteine. An L-methionine-binding site is contributed by Asp600. Glu606 is a binding site for 5-methyltetrahydropteroyltri-L-glutamate. The Zn(2+) site is built by His642, Cys644, and Glu666. The active-site Proton donor is His695. Cys727 lines the Zn(2+) pocket.

This sequence belongs to the vitamin-B12 independent methionine synthase family. Zn(2+) is required as a cofactor.

It catalyses the reaction 5-methyltetrahydropteroyltri-L-glutamate + L-homocysteine = tetrahydropteroyltri-L-glutamate + L-methionine. It functions in the pathway amino-acid biosynthesis; L-methionine biosynthesis via de novo pathway; L-methionine from L-homocysteine (MetE route): step 1/1. In terms of biological role, catalyzes the transfer of a methyl group from 5-methyltetrahydrofolate to homocysteine resulting in methionine formation. The polypeptide is 5-methyltetrahydropteroyltriglutamate--homocysteine methyltransferase (Actinobacillus pleuropneumoniae serotype 7 (strain AP76)).